The chain runs to 294 residues: MEDSMDMDMSPLRPQNYLFGCELKADKDYHFKVDNDENEHQLSLRTVSLGAGAKDELHIVEAEAMNYEGSPIKVTLATLKMSVQPTVSLGGFEITPPVVLRLKCGSGPVHISGQHLVAVEEDAESEDEEEEDVKLLSISGKRSAPGGGSKVPQKKVKLAADEDDDDDDEEDDDEDDDDDDFDDEEAEEKAPVKKSIRDTPAKNAQKSNQNGKDSKPSSTPRSKGQESFKKQEKTPKTPKGPSSVEDIKAKMQASIEKGGSLPKVEAKFINYVKNCFRMTDQEAIQDLWQWRKSL.

Met1 carries the N-acetylmethionine modification. The segment at 1–117 (MEDSMDMDMS…PVHISGQHLV (117 aa)) is necessary for interaction with APEX1. The segment at 1–186 (MEDSMDMDMS…DDDDFDDEEA (186 aa)) is required for interaction with SENP3. Ser4 is subject to Phosphoserine; by PLK1 and PLK2. At Ser10 the chain carries Phosphoserine. Lys27 participates in a covalent cross-link: Glycyl lysine isopeptide (Lys-Gly) (interchain with G-Cter in SUMO2). Lys32 carries the N6-acetyllysine; alternate modification. Lys32 participates in a covalent cross-link: Glycyl lysine isopeptide (Lys-Gly) (interchain with G-Cter in SUMO1); alternate. Residue Lys32 forms a Glycyl lysine isopeptide (Lys-Gly) (interchain with G-Cter in SUMO2); alternate linkage. At Ser43 the chain carries Phosphoserine. The residue at position 67 (Tyr67) is a Phosphotyrosine. Ser70 is subject to Phosphoserine. Residues Thr75 and Thr95 each carry the phosphothreonine modification. The span at 120–132 (EEDAESEDEEEED) shows a compositional bias: acidic residues. A disordered region spans residues 120–247 (EEDAESEDEE…PKGPSSVEDI (128 aa)). Ser125 is modified (phosphoserine; by CDK2). 2 positions are modified to phosphoserine: Ser137 and Ser139. A Glycyl lysine isopeptide (Lys-Gly) (interchain with G-Cter in SUMO2) cross-link involves residue Lys141. At Lys150 the chain carries N6-acetyllysine; alternate. A Glycyl lysine isopeptide (Lys-Gly) (interchain with G-Cter in SUMO2); alternate cross-link involves residue Lys150. The Nuclear localization signal signature appears at 152 to 157 (PQKKVK). Lys154 carries the post-translational modification N6-acetyllysine. The span at 161–187 (DEDDDDDDEEDDDEDDDDDDFDDEEAE) shows a compositional bias: acidic residues. The segment at 187–215 (EEKAPVKKSIRDTPAKNAQKSNQNGKDSK) is interaction with NOP2. Basic and acidic residues predominate over residues 188–200 (EKAPVKKSIRDTP). The Nuclear localization signal motif lies at 191–197 (PVKKSIR). Position 199 is a phosphothreonine; by CDK1, CDK2 and CDK6 (Thr199). Residues 202 to 222 (KNAQKSNQNGKDSKPSSTPRS) are compositionally biased toward polar residues. Residue Ser207 is modified to ADP-ribosylserine. Lys212 is subject to N6-acetyllysine. Lys215 is covalently cross-linked (Glycyl lysine isopeptide (Lys-Gly) (interchain with G-Cter in SUMO2)). Residue Thr219 is modified to Phosphothreonine; by CDK1. Positions 223 to 235 (KGQESFKKQEKTP) are enriched in basic and acidic residues. A Phosphoserine modification is found at Ser227. Lys229 is subject to N6-acetyllysine. Position 230 is an N6-acetyllysine; alternate (Lys230). A Glycyl lysine isopeptide (Lys-Gly) (interchain with G-Cter in SUMO); alternate cross-link involves residue Lys230. 2 positions are modified to phosphothreonine; by CDK1: Thr234 and Thr237. Phosphoserine is present on residues Ser242 and Ser243. Residues 243–294 (SVEDIKAKMQASIEKGGSLPKVEAKFINYVKNCFRMTDQEAIQDLWQWRKSL) form a required for nucleolar localization region. Lys248 participates in a covalent cross-link: Glycyl lysine isopeptide (Lys-Gly) (interchain with G-Cter in SUMO1); alternate. Residues Lys248 and Lys250 each participate in a glycyl lysine isopeptide (Lys-Gly) (interchain with G-Cter in SUMO2); alternate cross-link. Lys250 is modified (N6-acetyllysine; alternate). Position 254 is a phosphoserine (Ser254). The residue at position 257 (Lys257) is an N6-acetyllysine; alternate. Lys257 is covalently cross-linked (Glycyl lysine isopeptide (Lys-Gly) (interchain with G-Cter in SUMO1); alternate). Lys257 is covalently cross-linked (Glycyl lysine isopeptide (Lys-Gly) (interchain with G-Cter in SUMO2); alternate). The residue at position 257 (Lys257) is an N6-acetyllysine. Ser260 bears the Phosphoserine mark. Residues Lys263, Lys267, and Lys273 each participate in a glycyl lysine isopeptide (Lys-Gly) (interchain with G-Cter in SUMO2); alternate cross-link. Lys263 is covalently cross-linked (Glycyl lysine isopeptide (Lys-Gly) (interchain with G-Cter in SUMO); alternate). 2 positions are modified to N6-acetyllysine; alternate: Lys267 and Lys273. Lys267 is covalently cross-linked (Glycyl lysine isopeptide (Lys-Gly) (interchain with G-Cter in SUMO1); alternate). The residue at position 267 (Lys267) is an N6-succinyllysine; alternate. Position 279 is a phosphothreonine (Thr279). N6-acetyllysine is present on Lys292.

It belongs to the nucleoplasmin family. As to quaternary structure, decamer formed by two pentameric rings associated in a head-to-head fashion. Disulfide-linked dimers under certain conditions. The SWAP complex consists of NPM1, NCL, PARP1 and SWAP70. Interacts with NSUN2 and SENP3. Interacts with the methylated form of RPS10. Interacts (via N-terminal domain) with APEX1; the interaction is RNA-dependent and decreases in hydrogen peroxide-damaged cells. Interacts with isoform 1 of NEK2. Interacts with ROCK2 and BRCA2. Interacts with RPGR. Interacts with CENPW. Interacts with EIF2AK2/PKR. Interacts with CEBPA (isoform 4). Interacts with DDX31; this interaction prevents interaction between NPM1 and HDM2. Interacts with MYC; competitive with NOP53. Interacts with NOP53; the interaction is direct and competitive with MYC. Interacts with LRRC34. Interacts with RRP1B. Interacts with NPM3. Interacts with ALKBH2. Interacts with TTF1 (via C-terminal region). Interacts with NOP2. Interacts with ARID3C (via REKLES DOMAIN); the interaction mediates ARID3C nuclear shuttling. (Microbial infection) Interacts with hepatitis delta virus S-HDAg. In terms of assembly, (Microbial infection) Interacts with HTLV1 Rex protein (via N-terminal nuclear localization signal). Post-translationally, acetylated at C-terminal lysine residues, thereby increasing affinity to histones. ADP-ribosylated. In terms of processing, phosphorylated at Ser-4 by PLK1 and PLK2. Phosphorylation at Ser-4 by PLK2 in S phase is required for centriole duplication and is sufficient to trigger centriole replication. Phosphorylation at Ser-4 by PLK1 takes place during mitosis. Phosphorylated by CDK2 at Ser-125 and Thr-199. Phosphorylation at Thr-199 may trigger initiation of centrosome duplication. Phosphorylated by CDK1 at Thr-199, Thr-219, Thr-234 and Thr-237 during cell mitosis. When these four sites are phosphorated, RNA-binding activity seem to be abolished. May be phosphorylated at Ser-70 by NEK2. The Thr-199 phosphorylated form has higher affinity for ROCK2. CDK6 triggers Thr-199 phosphorylation when complexed to Kaposi's sarcoma herpesvirus (KSHV) V-cyclin, leading to viral reactivation by reducing viral LANA levels. Post-translationally, sumoylated by ARF. Ubiquitinated. Ubiquitination leads to proteasomal degradation. Deubiquitinated by USP36.

It is found in the nucleus. The protein localises to the nucleolus. The protein resides in the nucleoplasm. It localises to the cytoplasm. Its subcellular location is the cytoskeleton. It is found in the microtubule organizing center. The protein localises to the centrosome. In terms of biological role, involved in diverse cellular processes such as ribosome biogenesis, centrosome duplication, protein chaperoning, histone assembly, cell proliferation, and regulation of tumor suppressors p53/TP53 and ARF. Binds ribosome presumably to drive ribosome nuclear export. Associated with nucleolar ribonucleoprotein structures and bind single-stranded nucleic acids. Acts as a chaperonin for the core histones H3, H2B and H4. Stimulates APEX1 endonuclease activity on apurinic/apyrimidinic (AP) double-stranded DNA but inhibits APEX1 endonuclease activity on AP single-stranded RNA. May exert a control of APEX1 endonuclease activity within nucleoli devoted to repair AP on rDNA and the removal of oxidized rRNA molecules. In concert with BRCA2, regulates centrosome duplication. Regulates centriole duplication: phosphorylation by PLK2 is able to trigger centriole replication. Negatively regulates the activation of EIF2AK2/PKR and suppresses apoptosis through inhibition of EIF2AK2/PKR autophosphorylation. Antagonizes the inhibitory effect of ATF5 on cell proliferation and relieves ATF5-induced G2/M blockade. In complex with MYC enhances the transcription of MYC target genes. May act as chaperonin or cotransporter in the nucleolar localization of transcription termination factor TTF1. This is Nucleophosmin from Homo sapiens (Human).